An 849-amino-acid chain; its full sequence is Alanine--tRNA ligase (849 aa).

4 residues coordinate Zn(2+): His551, His555, Cys653, and His657.

Belongs to the class-II aminoacyl-tRNA synthetase family. Requires Zn(2+) as cofactor.

Its subcellular location is the cytoplasm. The enzyme catalyses tRNA(Ala) + L-alanine + ATP = L-alanyl-tRNA(Ala) + AMP + diphosphate. In terms of biological role, catalyzes the attachment of alanine to tRNA(Ala) in a two-step reaction: alanine is first activated by ATP to form Ala-AMP and then transferred to the acceptor end of tRNA(Ala). Also edits incorrectly charged Ser-tRNA(Ala) and Gly-tRNA(Ala) via its editing domain. This Sulfurimonas denitrificans (strain ATCC 33889 / DSM 1251) (Thiomicrospira denitrificans (strain ATCC 33889 / DSM 1251)) protein is Alanine--tRNA ligase.